Here is a 303-residue protein sequence, read N- to C-terminus: Mitochondrial carrier homolog 2 (303 aa).

A2 carries the post-translational modification N-acetylalanine. The Mitochondrial intermembrane portion of the chain corresponds to 2–15; that stretch reads ADAASQVLLGSGLT. 2 Solcar repeats span residues 2–98 and 118–206; these read ADAA…YQEC and DRVI…VNTY. A helical transmembrane segment spans residues 16-36; sequence ILSQPLMYVKVLIQVGYEPLA. At 37–77 the chain is on the cytoplasmic side; sequence PTVGRNIFGRQVCQLPGLFCYAQHIASIDGKRGLFTGLTPR. The chain crosses the membrane as a helical span at residues 78 to 92; the sequence is LCSGVLGTVVHGKVL. Over 93-135 the chain is Mitochondrial intermembrane; sequence QHYQECDKAEESGSGNVQKEVSSSFDRVIKETTREMMARSAAT. Residues 136-156 traverse the membrane as a helical segment; that stretch reads LITHPFHVITLRSMVQFIGRE. The Cytoplasmic portion of the chain corresponds to 157 to 180; it reads SKYCGLCDSIATIYREEGILGFFA. The helical transmembrane segment at 181–199 threads the bilayer; that stretch reads GLIPRLLGDIISLWLCNSL. At 200–231 the chain is on the mitochondrial intermembrane side; that stretch reads AYLVNTYALDSGVSTMNEMKSYSQAVTGFFAS. A helical membrane pass occupies residues 232-252; the sequence is MLTYPFVLVSNLMAVNNCGLA. The Cytoplasmic segment spans residues 253–280; that stretch reads GGCPPYAPIYSSWIDCWCMLQKEGNMSR. The helical transmembrane segment at 281–303 threads the bilayer; the sequence is GNSLFFRKVPFGKTYCCDLRMLI.

It belongs to the mitochondrial carrier (TC 2.A.29) family. As to quaternary structure, interacts with p15BID.

The protein resides in the mitochondrion outer membrane. Protein insertase that mediates insertion of transmembrane proteins into the mitochondrial outer membrane. Catalyzes insertion of proteins with alpha-helical transmembrane regions, such as signal-anchored, tail-anchored and multi-pass membrane proteins. Does not mediate insertion of beta-barrel transmembrane proteins. Also acts as a receptor for the truncated form of pro-apoptotic BH3-interacting domain death agonist (p15 BID) and has therefore a critical function in apoptosis. Regulates the quiescence/cycling of hematopoietic stem cells (HSCs). Acts as a regulator of mitochondrial fusion, essential for the naive-to-primed interconversion of embryonic stem cells (ESCs). Acts as a regulator of lipid homeostasis and has a regulatory role in adipocyte differentiation and biology. The sequence is that of Mitochondrial carrier homolog 2 (MTCH2) from Bos taurus (Bovine).